The primary structure comprises 274 residues: Ubiquinone biosynthesis protein COQ4 homolog, mitochondrial (274 aa).

A mitochondrion-targeting transit peptide spans 1–20; it reads MLRQTAFRSMKLNRTPGRYF. The disordered stretch occupies residues 13 to 40; the sequence is NRTPGRYFTTAENMDTGSSQSPPDTEQK. Residues 22–36 show a composition bias toward polar residues; it reads TAENMDTGSSQSPPD. His177, Asp178, His181, and Glu193 together coordinate Zn(2+).

It belongs to the COQ4 family. Component of a multi-subunit COQ enzyme complex. The cofactor is Zn(2+).

It is found in the mitochondrion inner membrane. It carries out the reaction a 4-hydroxy-3-methoxy-5-(all-trans-polyprenyl)benzoate + H(+) = a 2-methoxy-6-(all-trans-polyprenyl)phenol + CO2. It participates in cofactor biosynthesis; ubiquinone biosynthesis. In terms of biological role, lyase that catalyzes the C1-decarboxylation of 4-hydroxy-3-methoxy-5-(all-trans-polyprenyl)benzoic acid into 2-methoxy-6-(all-trans-polyprenyl)phenol during ubiquinone biosynthesis. This chain is Ubiquinone biosynthesis protein COQ4 homolog, mitochondrial, found in Aedes aegypti (Yellowfever mosquito).